A 1241-amino-acid chain; its full sequence is ATP-dependent helicase/nuclease subunit A (1241 aa).

In terms of domain architecture, UvrD-like helicase ATP-binding spans 12 to 485 (SQWTDDQWKA…IDLAKNFRSR (474 aa)). 33–40 (AAAGSGKT) is an ATP binding site. The UvrD-like helicase C-terminal domain maps to 505 to 805 (GEIDYDADAE…RIMTIHKSKG (301 aa)).

Belongs to the helicase family. AddA subfamily. Heterodimer of AddA and AddB/RexB. Mg(2+) serves as cofactor.

The catalysed reaction is Couples ATP hydrolysis with the unwinding of duplex DNA by translocating in the 3'-5' direction.. It carries out the reaction ATP + H2O = ADP + phosphate + H(+). The heterodimer acts as both an ATP-dependent DNA helicase and an ATP-dependent, dual-direction single-stranded exonuclease. Recognizes the chi site generating a DNA molecule suitable for the initiation of homologous recombination. The AddA nuclease domain is required for chi fragment generation; this subunit has the helicase and 3' -&gt; 5' nuclease activities. The polypeptide is ATP-dependent helicase/nuclease subunit A (Bacillus cereus (strain B4264)).